The sequence spans 508 residues: MRLNPEEVSWVIQQEIEKYHEDLSLKFESAGRVLYVGDGIARVWGLDDVMMSELVEFPDGTLGIVLNLEIDNVGVIILGSDRNIREQDIVKRTGKIASVPVGEGMLGRVINALGQPIDGKGAIETKEFRAIESSAPGVVQRKPVNEPVQTGIKAIDSMIPIGRGQRELIIGDRQTGKTTVILDTIINQKNTGVCCIYVAIGQKSSTIAQVVKILEEHDAMKYTIIVAATASDPAALQYVAPYSATALGEHFMYNGKHVICFYDDLSKHAQAYREIALLLRRPPGREAYPGDIFYLHSRLLERSAKLSTELGGGSLTAVPVIETQANDVTTYIPTNVISITDGQIYLESDLFYAGVRPAINVGISASRVGGKAQSKAMKKVAASLRLDLAQYRELAAFAQFGSEMDKTTQAQLVRGERMIEVLKQDKFKPISLSKQVMIIFTGTKGFLDDLPLPFIKNFENEFYLFMDENHPHISNSIEQSLDLDQKTMEQLNEAVTKFKSDFKLRYQI.

Residue 171 to 178 (GDRQTGKT) coordinates ATP.

It belongs to the ATPase alpha/beta chains family. In terms of assembly, F-type ATPases have 2 components, CF(1) - the catalytic core - and CF(0) - the membrane proton channel. CF(1) has five subunits: alpha(3), beta(3), gamma(1), delta(1), epsilon(1). CF(0) has three main subunits: a(1), b(2) and c(9-12). The alpha and beta chains form an alternating ring which encloses part of the gamma chain. CF(1) is attached to CF(0) by a central stalk formed by the gamma and epsilon chains, while a peripheral stalk is formed by the delta and b chains.

Its subcellular location is the cell membrane. The enzyme catalyses ATP + H2O + 4 H(+)(in) = ADP + phosphate + 5 H(+)(out). Produces ATP from ADP in the presence of a proton gradient across the membrane. The alpha chain is a regulatory subunit. The chain is ATP synthase subunit alpha from Protochlamydia amoebophila (strain UWE25).